We begin with the raw amino-acid sequence, 58 residues long: uncharacterized protein (58 aa).

This is an uncharacterized protein from Phaseolus vulgaris (Kidney bean).